We begin with the raw amino-acid sequence, 493 residues long: Probable cytosol aminopeptidase (493 aa).

Mn(2+) contacts are provided by Lys-257 and Asp-262. Residue Lys-269 is part of the active site. Residues Asp-281, Asp-341, and Glu-343 each contribute to the Mn(2+) site. The active site involves Arg-345.

It belongs to the peptidase M17 family. Requires Mn(2+) as cofactor.

It localises to the cytoplasm. The enzyme catalyses Release of an N-terminal amino acid, Xaa-|-Yaa-, in which Xaa is preferably Leu, but may be other amino acids including Pro although not Arg or Lys, and Yaa may be Pro. Amino acid amides and methyl esters are also readily hydrolyzed, but rates on arylamides are exceedingly low.. The catalysed reaction is Release of an N-terminal amino acid, preferentially leucine, but not glutamic or aspartic acids.. Functionally, presumably involved in the processing and regular turnover of intracellular proteins. Catalyzes the removal of unsubstituted N-terminal amino acids from various peptides. The chain is Probable cytosol aminopeptidase from Synechococcus sp. (strain WH7803).